The chain runs to 1153 residues: Cytosolic carboxypeptidase 1 (1153 aa).

Residues 357 to 400 (NQPPGVDDVVDESDENEATEVDTENDTENEEDDTGHKTQNDDIE) are disordered. The segment covering 364 to 389 (DVVDESDENEATEVDTENDTENEEDD) has biased composition (acidic residues). A Peptidase M14 domain is found at 774-1063 (YPYTYSMLKM…QFCLALLRLR (290 aa)). Residues His845, Glu848, and His942 each contribute to the Zn(2+) site. Glu1027 serves as the catalytic Proton donor/acceptor. The span at 1108 to 1128 (AFLEEVDYSAESNDENDPELE) shows a compositional bias: acidic residues. Residues 1108 to 1153 (AFLEEVDYSAESNDENDPELEPDLRDNHALPDPSSDSELSHQDSLT) are disordered. Positions 1141 to 1153 (SSDSELSHQDSLT) are enriched in polar residues.

It belongs to the peptidase M14 family. The cofactor is Zn(2+).

The protein resides in the cytoplasm. Its subcellular location is the cytosol. The protein localises to the nucleus. It localises to the mitochondrion. It catalyses the reaction (L-glutamyl)(n+1)-gamma-L-glutamyl-L-glutamyl-[protein] + H2O = (L-glutamyl)(n)-gamma-L-glutamyl-L-glutamyl-[protein] + L-glutamate. It carries out the reaction C-terminal L-alpha-aminoacyl-L-glutamyl-L-glutamyl-[tubulin] + H2O = C-terminal L-alpha-aminoacyl-L-glutamyl-[tubulin] + L-glutamate. Metallocarboxypeptidase that mediates protein deglutamylation of tubulin and non-tubulin target proteins. Catalyzes the removal of polyglutamate side chains present on the gamma-carboxyl group of glutamate residues within the C-terminal tail of alpha- and beta-tubulin. Specifically cleaves tubulin long-side-chains, while it is not able to remove the branching point glutamate. Also catalyzes the removal of polyglutamate residues from the carboxy-terminus of alpha-tubulin as well as non-tubulin proteins. In Danio rerio (Zebrafish), this protein is Cytosolic carboxypeptidase 1 (agtpbp1).